Reading from the N-terminus, the 84-residue chain is MDDFLEHLSKDDNKAWYGAEETERAAKLDAIETLLITDSVLKRNDVKKREKYLDLIENSGNNNGKIFVLSTSKITVSNLTNQQI.

It belongs to the eukaryotic release factor 1 family. Pelota subfamily. Highly divergent.

In Saccharomyces cerevisiae (strain ATCC 204508 / S288c) (Baker's yeast), this protein is Putative pelota-like protein YCL001W-B.